A 603-amino-acid polypeptide reads, in one-letter code: Arginine--tRNA ligase (603 aa).

The 'HIGH' region motif lies at 143–153; it reads PNIAKEMHVGH.

This sequence belongs to the class-I aminoacyl-tRNA synthetase family. As to quaternary structure, monomer.

Its subcellular location is the cytoplasm. The enzyme catalyses tRNA(Arg) + L-arginine + ATP = L-arginyl-tRNA(Arg) + AMP + diphosphate. The protein is Arginine--tRNA ligase of Prochlorococcus marinus (strain SARG / CCMP1375 / SS120).